A 100-amino-acid polypeptide reads, in one-letter code: Large ribosomal subunit protein uL23 (100 aa).

The protein belongs to the universal ribosomal protein uL23 family. As to quaternary structure, part of the 50S ribosomal subunit. Contacts protein L29, and trigger factor when it is bound to the ribosome.

In terms of biological role, one of the early assembly proteins it binds 23S rRNA. One of the proteins that surrounds the polypeptide exit tunnel on the outside of the ribosome. Forms the main docking site for trigger factor binding to the ribosome. The polypeptide is Large ribosomal subunit protein uL23 (Shewanella sp. (strain MR-4)).